The following is a 345-amino-acid chain: N-acetyl-gamma-glutamyl-phosphate reductase (345 aa).

Residue Cys149 is part of the active site.

Belongs to the NAGSA dehydrogenase family. Type 1 subfamily.

Its subcellular location is the cytoplasm. It catalyses the reaction N-acetyl-L-glutamate 5-semialdehyde + phosphate + NADP(+) = N-acetyl-L-glutamyl 5-phosphate + NADPH + H(+). It functions in the pathway amino-acid biosynthesis; L-arginine biosynthesis; N(2)-acetyl-L-ornithine from L-glutamate: step 3/4. Its function is as follows. Catalyzes the NADPH-dependent reduction of N-acetyl-5-glutamyl phosphate to yield N-acetyl-L-glutamate 5-semialdehyde. This chain is N-acetyl-gamma-glutamyl-phosphate reductase, found in Geobacillus sp. (strain WCH70).